The primary structure comprises 691 residues: DNA ligase (691 aa).

NAD(+) contacts are provided by residues Asp41–Asp45, Ser91–Leu92, and Glu121. Catalysis depends on Lys123, which acts as the N6-AMP-lysine intermediate. NAD(+)-binding residues include Arg144, Glu184, Lys300, and Lys324. 4 residues coordinate Zn(2+): Cys418, Cys421, Cys437, and Cys443. The BRCT domain maps to Ser607–Thr691.

It belongs to the NAD-dependent DNA ligase family. LigA subfamily. The cofactor is Mg(2+). Requires Mn(2+) as cofactor.

It carries out the reaction NAD(+) + (deoxyribonucleotide)n-3'-hydroxyl + 5'-phospho-(deoxyribonucleotide)m = (deoxyribonucleotide)n+m + AMP + beta-nicotinamide D-nucleotide.. DNA ligase that catalyzes the formation of phosphodiester linkages between 5'-phosphoryl and 3'-hydroxyl groups in double-stranded DNA using NAD as a coenzyme and as the energy source for the reaction. It is essential for DNA replication and repair of damaged DNA. The chain is DNA ligase from Mycobacterium tuberculosis (strain ATCC 25177 / H37Ra).